Here is a 484-residue protein sequence, read N- to C-terminus: 6-phosphogluconate dehydrogenase, decarboxylating (484 aa).

Residues 11–16, 34–36, 76–78, and Asn104 each bind NADP(+); these read GLAVMG, NRT, and VRA. Substrate contacts are provided by residues Asn104 and 130-132; that span reads SGG. Lys185 acts as the Proton acceptor in catalysis. 188–189 contacts substrate; the sequence is HN. Glu192 acts as the Proton donor in catalysis. Substrate is bound by residues Tyr193, Lys262, Arg289, Arg447, and His453.

This sequence belongs to the 6-phosphogluconate dehydrogenase family. In terms of assembly, homodimer.

The enzyme catalyses 6-phospho-D-gluconate + NADP(+) = D-ribulose 5-phosphate + CO2 + NADPH. The protein operates within carbohydrate degradation; pentose phosphate pathway; D-ribulose 5-phosphate from D-glucose 6-phosphate (oxidative stage): step 3/3. Catalyzes the oxidative decarboxylation of 6-phosphogluconate to ribulose 5-phosphate and CO(2), with concomitant reduction of NADP to NADPH. The sequence is that of 6-phosphogluconate dehydrogenase, decarboxylating (gnd) from Haemophilus ducreyi (strain 35000HP / ATCC 700724).